Here is a 343-residue protein sequence, read N- to C-terminus: NADH-quinone oxidoreductase subunit H (343 aa).

8 helical membrane passes run Phe-5–Met-25, Phe-76–Ile-96, Ala-119–Trp-139, Val-158–Leu-178, Met-190–Ala-210, Leu-243–Gly-263, Ile-284–Val-304, and Ile-323–Lys-343.

It belongs to the complex I subunit 1 family. In terms of assembly, NDH-1 is composed of 14 different subunits. Subunits NuoA, H, J, K, L, M, N constitute the membrane sector of the complex.

The protein localises to the cell inner membrane. The catalysed reaction is a quinone + NADH + 5 H(+)(in) = a quinol + NAD(+) + 4 H(+)(out). Its function is as follows. NDH-1 shuttles electrons from NADH, via FMN and iron-sulfur (Fe-S) centers, to quinones in the respiratory chain. The immediate electron acceptor for the enzyme in this species is believed to be ubiquinone. Couples the redox reaction to proton translocation (for every two electrons transferred, four hydrogen ions are translocated across the cytoplasmic membrane), and thus conserves the redox energy in a proton gradient. This subunit may bind ubiquinone. The sequence is that of NADH-quinone oxidoreductase subunit H from Flavobacterium psychrophilum (strain ATCC 49511 / DSM 21280 / CIP 103535 / JIP02/86).